The primary structure comprises 318 residues: B3 domain-containing protein At1g05930 (318 aa).

Positions 201-293 (FNRLISNDFL…VLCFAMRQWR (93 aa)) form a DNA-binding region, TF-B3.

The protein localises to the nucleus. The sequence is that of B3 domain-containing protein At1g05930 from Arabidopsis thaliana (Mouse-ear cress).